Here is a 308-residue protein sequence, read N- to C-terminus: Glycine--tRNA ligase alpha subunit (308 aa).

The protein belongs to the class-II aminoacyl-tRNA synthetase family. As to quaternary structure, tetramer of two alpha and two beta subunits.

Its subcellular location is the cytoplasm. It catalyses the reaction tRNA(Gly) + glycine + ATP = glycyl-tRNA(Gly) + AMP + diphosphate. The polypeptide is Glycine--tRNA ligase alpha subunit (Streptococcus pyogenes serotype M3 (strain SSI-1)).